We begin with the raw amino-acid sequence, 188 residues long: Elongation factor P (188 aa).

At K34 the chain carries N6-(3,6-diaminohexanoyl)-5-hydroxylysine.

Belongs to the elongation factor P family. In terms of processing, may be beta-lysylated on the epsilon-amino group of Lys-34 by the combined action of EpmA and EpmB, and then hydroxylated on the C5 position of the same residue by EpmC (if this protein is present). Lysylation is critical for the stimulatory effect of EF-P on peptide-bond formation. The lysylation moiety may extend toward the peptidyltransferase center and stabilize the terminal 3-CCA end of the tRNA. Hydroxylation of the C5 position on Lys-34 may allow additional potential stabilizing hydrogen-bond interactions with the P-tRNA.

It is found in the cytoplasm. It functions in the pathway protein biosynthesis; polypeptide chain elongation. In terms of biological role, involved in peptide bond synthesis. Alleviates ribosome stalling that occurs when 3 or more consecutive Pro residues or the sequence PPG is present in a protein, possibly by augmenting the peptidyl transferase activity of the ribosome. Modification of Lys-34 is required for alleviation. The chain is Elongation factor P from Vibrio vulnificus (strain CMCP6).